The sequence spans 594 residues: Aspartate--tRNA(Asp/Asn) ligase (594 aa).

Glu175 serves as a coordination point for L-aspartate. The aspartate stretch occupies residues 199 to 202; that stretch reads QQFK. L-aspartate contacts are provided by Arg221 and His455. 221–223 is an ATP binding site; sequence RDE. Glu489 provides a ligand contact to ATP. Arg496 contributes to the L-aspartate binding site. Position 541–544 (541–544) interacts with ATP; the sequence is GIDR.

This sequence belongs to the class-II aminoacyl-tRNA synthetase family. Type 1 subfamily. As to quaternary structure, homodimer.

It localises to the cytoplasm. It catalyses the reaction tRNA(Asx) + L-aspartate + ATP = L-aspartyl-tRNA(Asx) + AMP + diphosphate. Its function is as follows. Aspartyl-tRNA synthetase with relaxed tRNA specificity since it is able to aspartylate not only its cognate tRNA(Asp) but also tRNA(Asn). Reaction proceeds in two steps: L-aspartate is first activated by ATP to form Asp-AMP and then transferred to the acceptor end of tRNA(Asp/Asn). In Pelagibacter ubique (strain HTCC1062), this protein is Aspartate--tRNA(Asp/Asn) ligase.